A 21-amino-acid chain; its full sequence is Nigrocin-2 (21 aa).

Cysteines 15 and 21 form a disulfide.

As to expression, expressed by the skin dorsal glands.

It is found in the secreted. Functionally, thanks to its single linear amphipathic alpha-helix, may integrate into membrane phospholipids, leading to lysis of the membrane. Shows antibacterial activity against both Gram-positive and Gram-negative bacteria and against the fungus C.albicans. Has no hemolytic activity. In Pelophylax nigromaculatus (Black-spotted frog), this protein is Nigrocin-2.